Reading from the N-terminus, the 109-residue chain is Nucleoid-associated protein Asuc_0997 (109 aa).

The tract at residues 1–23 is disordered; it reads MFGKGGLGGLMKQAQQMQERMQK.

This sequence belongs to the YbaB/EbfC family. Homodimer.

It is found in the cytoplasm. The protein resides in the nucleoid. Functionally, binds to DNA and alters its conformation. May be involved in regulation of gene expression, nucleoid organization and DNA protection. In Actinobacillus succinogenes (strain ATCC 55618 / DSM 22257 / CCUG 43843 / 130Z), this protein is Nucleoid-associated protein Asuc_0997.